A 765-amino-acid polypeptide reads, in one-letter code: Membrane metallo-endopeptidase-like 1 (765 aa).

Residues M1–G19 are Cytoplasmic-facing. The chain crosses the membrane as a helical; Signal-anchor for type II membrane protein span at residues L20 to I40. Residues G41–W765 are Lumenal-facing. The Peptidase M13 domain maps to I74–W765. Intrachain disulfides connect C75-C80, C98-C750, C106-C710, C161-C425, and C636-C762. R121 is an a peptide binding site. 4 N-linked (GlcNAc...) asparagine glycosylation sites follow: N163, N279, N303, and N336. Residues F523–L549 are a coiled coil. Residue H599 participates in Zn(2+) binding. E600 is an active-site residue. Residues H603 and E662 each coordinate Zn(2+). D666 acts as the Proton donor in catalysis. An N-linked (GlcNAc...) asparagine glycan is attached at N694.

This sequence belongs to the peptidase M13 family. It depends on Zn(2+) as a cofactor. N-glycosylated. As to expression, highly expressed in testis. Also expressed in ovary. Weakly or not expressed in brain, lung, heart, liver, kidney, adrenal gland and intestine.

Its subcellular location is the membrane. The protein resides in the secreted. The enzyme catalyses Preferential cleavage of polypeptides between hydrophobic residues, particularly with Phe or Tyr at P1'.. Inhibited by thiorphan and phosphoramidon. In terms of biological role, metalloprotease involved in sperm function, possibly by modulating the processes of fertilization and early embryonic development. Degrades a broad variety of small peptides with a preference for peptides shorter than 3 kDa containing neutral bulky aliphatic or aromatic amino acid residues. Shares the same substrate specificity with MME and cleaves peptides at the same amide bond. This is Membrane metallo-endopeptidase-like 1 (Mmel1) from Mus musculus (Mouse).